The chain runs to 974 residues: Kinase-interacting protein 1 (974 aa).

Residues tyrosine 10–leucine 90 enclose the NAB domain. Residues serine 151–lysine 170 form a disordered region. Positions leucine 173 to arginine 423 form a coiled coil. The tract at residues alanine 586–lysine 614 is disordered. Residues serine 599 to threonine 610 are compositionally biased toward polar residues. Positions asparagine 641–serine 697 form a coiled coil. The tract at residues leucine 714–glutamate 740 is disordered. Positions leucine 726 to aspartate 736 are enriched in basic and acidic residues. Coiled coils occupy residues histidine 784 to glutamate 807 and alanine 882 to alanine 905.

As to quaternary structure, homodimer or homooligomer. Interacts with PRK1. Post-translationally, phosphorylated by PRK1. In terms of tissue distribution, expressed in mature pollen grains and pollen tubes, but not in style, ovary, petal, leaf, root or sepal.

The protein localises to the cytoplasm. In terms of biological role, probably involved in the receptor-like kinase-mediated signal transduction pathway. The protein is Kinase-interacting protein 1 of Petunia integrifolia (Violet-flowered petunia).